We begin with the raw amino-acid sequence, 544 residues long: Chaperonin GroEL (544 aa).

Residues 30-33 (TLGP), lysine 51, 87-91 (DGTTT), glycine 415, and aspartate 495 each bind ATP.

This sequence belongs to the chaperonin (HSP60) family. Forms a cylinder of 14 subunits composed of two heptameric rings stacked back-to-back. Interacts with the co-chaperonin GroES.

The protein localises to the cytoplasm. The catalysed reaction is ATP + H2O + a folded polypeptide = ADP + phosphate + an unfolded polypeptide.. Functionally, together with its co-chaperonin GroES, plays an essential role in assisting protein folding. The GroEL-GroES system forms a nano-cage that allows encapsulation of the non-native substrate proteins and provides a physical environment optimized to promote and accelerate protein folding. This chain is Chaperonin GroEL, found in Neisseria flavescens.